Here is a 157-residue protein sequence, read N- to C-terminus: MKILYPGTFDPLTNGHIDLIERAEKIFGNLVVAVLENTSKTPTFNLQRRIIQIKNSLSHLPNIEVISYSGLTVDCANELKANLILRGLRAMSDFEYELQIAHTNKSLNNDIETIFLSTNTNYSFLSSSLVKEVAKFGGEINHMVPPSVERDLKEYFK.

T8 lines the substrate pocket. Residues 8–9 and H16 each bind ATP; that span reads TF. Substrate is bound by residues K40, T72, and R86. ATP contacts are provided by residues 87–89, E97, and 122–128; these read GLR and YSFLSSS.

It belongs to the bacterial CoaD family. In terms of assembly, homohexamer. Mg(2+) is required as a cofactor.

The protein localises to the cytoplasm. It catalyses the reaction (R)-4'-phosphopantetheine + ATP + H(+) = 3'-dephospho-CoA + diphosphate. Its pathway is cofactor biosynthesis; coenzyme A biosynthesis; CoA from (R)-pantothenate: step 4/5. Functionally, reversibly transfers an adenylyl group from ATP to 4'-phosphopantetheine, yielding dephospho-CoA (dPCoA) and pyrophosphate. The chain is Phosphopantetheine adenylyltransferase from Prochlorococcus marinus (strain MIT 9215).